Consider the following 362-residue polypeptide: UDP-3-O-acylglucosamine N-acyltransferase (362 aa).

Residue histidine 251 is the Proton acceptor of the active site.

The protein belongs to the transferase hexapeptide repeat family. LpxD subfamily. In terms of assembly, homotrimer.

It catalyses the reaction a UDP-3-O-[(3R)-3-hydroxyacyl]-alpha-D-glucosamine + a (3R)-hydroxyacyl-[ACP] = a UDP-2-N,3-O-bis[(3R)-3-hydroxyacyl]-alpha-D-glucosamine + holo-[ACP] + H(+). The protein operates within bacterial outer membrane biogenesis; LPS lipid A biosynthesis. In terms of biological role, catalyzes the N-acylation of UDP-3-O-acylglucosamine using 3-hydroxyacyl-ACP as the acyl donor. Is involved in the biosynthesis of lipid A, a phosphorylated glycolipid that anchors the lipopolysaccharide to the outer membrane of the cell. The protein is UDP-3-O-acylglucosamine N-acyltransferase of Cupriavidus pinatubonensis (strain JMP 134 / LMG 1197) (Cupriavidus necator (strain JMP 134)).